The chain runs to 458 residues: Tyrosine phenol-lyase (458 aa).

An N6-(pyridoxal phosphate)lysine modification is found at Lys-258.

It belongs to the beta-eliminating lyase family. Homotetramer. Requires pyridoxal 5'-phosphate as cofactor.

It catalyses the reaction L-tyrosine + H2O = phenol + pyruvate + NH4(+). The protein is Tyrosine phenol-lyase (tpl) of Pasteurella multocida (strain Pm70).